A 554-amino-acid chain; its full sequence is Polyamine aminopropyltransferase 2 (554 aa).

Residues 1–13 show a composition bias toward pro residues; sequence MIEPHAPAPPGSP. The segment at 1–20 is disordered; sequence MIEPHAPAPPGSPPSWGGPC. Helical transmembrane passes span 37–57, 69–89, 106–126, 139–159, 184–204, and 206–226; these read FLVL…ELEL, VTQA…GSLA, AALA…FAWT, ILLV…VPLL, VGAL…LGQL, and GALL…LGLF. Residues 235-516 form a spermidine synthase region; it reads RWLLLTANAV…RTAPAPRLDP (282 aa). The PABS domain occupies 247–492; sequence ALLATATVLA…SVPGPRRAAA (246 aa). An S-methyl-5'-thioadenosine-binding site is contributed by Gln281. Residues His313 and Asp335 each coordinate spermidine. S-methyl-5'-thioadenosine-binding positions include Glu355 and 389–390; that span reads DA. The active-site Proton acceptor is the Asp408. Residues 476-495 are disordered; that stretch reads DTGPGPGSVPGPRRAAAGPP. The span at 485 to 495 shows a compositional bias: low complexity; the sequence is PGPRRAAAGPP.

This sequence belongs to the spermidine/spermine synthase family. Homodimer or homotetramer.

It is found in the cell membrane. The catalysed reaction is S-adenosyl 3-(methylsulfanyl)propylamine + putrescine = S-methyl-5'-thioadenosine + spermidine + H(+). It participates in amine and polyamine biosynthesis; spermidine biosynthesis; spermidine from putrescine: step 1/1. Its function is as follows. Catalyzes the irreversible transfer of a propylamine group from the amino donor S-adenosylmethioninamine (decarboxy-AdoMet) to putrescine (1,4-diaminobutane) to yield spermidine. This chain is Polyamine aminopropyltransferase 2, found in Streptomyces coelicolor (strain ATCC BAA-471 / A3(2) / M145).